The sequence spans 66 residues: MAKGKDVRVKVILECTGCVRKSVNKGSRGVSRYITQKNRHNTPSRLELRKFCPYCYKHTIHGEIKK.

In terms of assembly, component of the chloroplast large ribosomal subunit (LSU). Mature 70S chloroplast ribosomes of higher plants consist of a small (30S) and a large (50S) subunit. The 30S small subunit contains 1 molecule of ribosomal RNA (16S rRNA) and 24 different proteins. The 50S large subunit contains 3 rRNA molecules (23S, 5S and 4.5S rRNA) and 33 different proteins.

The protein resides in the plastid. It localises to the chloroplast. In terms of biological role, component of the chloroplast ribosome (chloro-ribosome), a dedicated translation machinery responsible for the synthesis of chloroplast genome-encoded proteins, including proteins of the transcription and translation machinery and components of the photosynthetic apparatus. In Spinacia oleracea (Spinach), this protein is Large ribosomal subunit protein bL33c (rpl33).